A 139-amino-acid polypeptide reads, in one-letter code: Probable cytochrome b5 (139 aa).

Residues 2–78 enclose the Cytochrome b5 heme-binding domain; the sequence is SAEFTYQDVA…LEPLLVGTLK (77 aa). Heme contacts are provided by His-37 and His-61. Residues 105-125 traverse the membrane as a helical segment; it reads GLGIGLYAVLVLGGLAGFAAY.

It belongs to the cytochrome b5 family.

Its subcellular location is the endoplasmic reticulum membrane. The protein resides in the microsome membrane. Its function is as follows. Membrane bound hemoprotein which function as an electron carrier for several membrane bound oxygenases. The protein is Probable cytochrome b5 of Neurospora crassa (strain ATCC 24698 / 74-OR23-1A / CBS 708.71 / DSM 1257 / FGSC 987).